The sequence spans 243 residues: MIVIPAIDLKEGRCVRLEQGLMEKDTVYNDNPGAQARSWQEQGGELLHIVDLDGAFAGVPRNRDAIRAIAEAVSIPTELGGGIRDLPTIEAYLELGIDRVILGTVAKENPELVREACRLFPGRIVVGIDARDGLVAVRGWADVTEKLATELAKEMEGFGVEAIIYTDIARDGMMGGPNLEATRALAESISVPVIASGGVSCLEDIARLMTIEDSGVTGVITGKALYTGSLDLREAVALTKGKA.

Asp-8 acts as the Proton acceptor in catalysis. Asp-129 (proton donor) is an active-site residue.

Belongs to the HisA/HisF family.

Its subcellular location is the cytoplasm. It catalyses the reaction 1-(5-phospho-beta-D-ribosyl)-5-[(5-phospho-beta-D-ribosylamino)methylideneamino]imidazole-4-carboxamide = 5-[(5-phospho-1-deoxy-D-ribulos-1-ylimino)methylamino]-1-(5-phospho-beta-D-ribosyl)imidazole-4-carboxamide. It participates in amino-acid biosynthesis; L-histidine biosynthesis; L-histidine from 5-phospho-alpha-D-ribose 1-diphosphate: step 4/9. The chain is 1-(5-phosphoribosyl)-5-[(5-phosphoribosylamino)methylideneamino] imidazole-4-carboxamide isomerase from Syntrophotalea carbinolica (strain DSM 2380 / NBRC 103641 / GraBd1) (Pelobacter carbinolicus).